We begin with the raw amino-acid sequence, 217 residues long: Large ribosomal subunit protein uL3 (217 aa).

The protein belongs to the universal ribosomal protein uL3 family. In terms of assembly, part of the 50S ribosomal subunit. Forms a cluster with proteins L14 and L19.

One of the primary rRNA binding proteins, it binds directly near the 3'-end of the 23S rRNA, where it nucleates assembly of the 50S subunit. The sequence is that of Large ribosomal subunit protein uL3 from Mycobacterium bovis (strain ATCC BAA-935 / AF2122/97).